A 461-amino-acid chain; its full sequence is Adenosylmethionine-8-amino-7-oxononanoate aminotransferase (461 aa).

117–118 (GA) contacts pyridoxal 5'-phosphate. Residue tyrosine 150 coordinates substrate. Aspartate 263 provides a ligand contact to pyridoxal 5'-phosphate. Substrate-binding residues include lysine 296, glycine 331, and arginine 426. Position 296 is an N6-(pyridoxal phosphate)lysine (lysine 296).

It belongs to the class-III pyridoxal-phosphate-dependent aminotransferase family. BioA subfamily. Homodimer. Requires pyridoxal 5'-phosphate as cofactor.

It localises to the cytoplasm. The catalysed reaction is (8S)-8-amino-7-oxononanoate + S-adenosyl-L-methionine = S-adenosyl-4-methylsulfanyl-2-oxobutanoate + (7R,8S)-7,8-diammoniononanoate. It functions in the pathway cofactor biosynthesis; biotin biosynthesis; 7,8-diaminononanoate from 8-amino-7-oxononanoate (SAM route): step 1/1. Its function is as follows. Catalyzes the transfer of the alpha-amino group from S-adenosyl-L-methionine (SAM) to 7-keto-8-aminopelargonic acid (KAPA) to form 7,8-diaminopelargonic acid (DAPA). It is the only aminotransferase known to utilize SAM as an amino donor. The chain is Adenosylmethionine-8-amino-7-oxononanoate aminotransferase from Methanocaldococcus jannaschii (strain ATCC 43067 / DSM 2661 / JAL-1 / JCM 10045 / NBRC 100440) (Methanococcus jannaschii).